Consider the following 41-residue polypeptide: Large ribosomal subunit protein bL36 (41 aa).

Belongs to the bacterial ribosomal protein bL36 family.

The protein is Large ribosomal subunit protein bL36 of Beijerinckia indica subsp. indica (strain ATCC 9039 / DSM 1715 / NCIMB 8712).